The chain runs to 706 residues: Probable protein S-acyltransferase 20 (706 aa).

Helical transmembrane passes span Val-16–Phe-36 and Ile-41–Tyr-61. The DHHC domain maps to Leu-172–Ser-222. Catalysis depends on Cys-202, which acts as the S-palmitoyl cysteine intermediate. Helical transmembrane passes span Leu-220–Val-240 and Ala-275–Ile-295. 3 disordered regions span residues Ser-470–Glu-505, Leu-591–Asp-621, and Arg-680–Lys-706. 3 stretches are compositionally biased toward polar residues: residues His-492–Ser-501, Leu-591–Pro-603, and Ala-697–Lys-706.

The protein belongs to the DHHC palmitoyltransferase family.

The protein resides in the cell membrane. The protein localises to the cytoplasmic vesicle membrane. The enzyme catalyses L-cysteinyl-[protein] + hexadecanoyl-CoA = S-hexadecanoyl-L-cysteinyl-[protein] + CoA. Functionally, palmitoyl acyltransferase. The sequence is that of Probable protein S-acyltransferase 20 (PAT20) from Arabidopsis thaliana (Mouse-ear cress).